A 319-amino-acid polypeptide reads, in one-letter code: Polyprenyl transferase macG (319 aa).

Transmembrane regions (helical) follow at residues 28–45 (AWLCWYPAIWGACVAAGM), 48–68 (VSLELAPFLRLLFGIWASVTA), 106–126 (AVVAFICWLPVTLAITWGTLG), 127–147 (PAVMAGFIPVWVLSTIYPFMK), 152–172 (FPQVVLGAIIGGAVFPGWVGI), 182–202 (ALPLFFATASWVVYFDVFYAT), 224–244 (VQILLAVLGALQVLLFAVTAL), 249–269 (SLIFWVLGLGVWMVNVPWHIL), and 289–309 (LGLYLTGVSLLELFVVRVYDI).

Belongs to the UbiA prenyltransferase family. Mg(2+) is required as a cofactor.

The protein localises to the membrane. Its pathway is secondary metabolite biosynthesis; terpenoid biosynthesis. Its function is as follows. Polyprenyl transferase; part of the gene cluster that mediates the biosynthesis of macrophorins, isoprenoid epoxycyclohexenones containing cyclized drimane moieties. The first step of the pathway is the synthesis of 6-methylsalicylic acid (6-MSA) by the polyketide synthase macA. 6-MSA is then converted to m-cresol by the decarboxylase macB. The cytochrome P450 monooxygenase macC then catalyzes the oxidation of m-cresol to toluquinol. Epoxidation of toluquinol is then performed by the short chain dehydrogenase macD, with the help of macE, and a further prenylation by macG leads to 7-deacetoxyyanuthone A. The next step is the hydroxylation of C-22 of 7-deacetoxyyanuthone A by the cytochrome P450 monooxygenase macH to yield 22-deacetylyanuthone A. O-Mevalon transferase macI then attaches mevalon to the hydroxyl group of 22-deacetylyanuthone A to produce yanuthone E. The terpene cyclase macJ catalyzes the cyclization of 22-deacetylyanuthone A to macrophorin A. MacJ is also able to catalyze cyclization of yanuthone E and 7-deacetoxyyanuthone A to their corresponding macrophorins. The macJ products can be further modified by macH and macJ, as well as by the FAD-dependent monooxygenase macF, to produce additional macrophorins, including 4'-oxomacrophorin A, 4'-oxomacrophorin D and 4'-oxomacrophorin E. The polypeptide is Polyprenyl transferase macG (Penicillium terrestre).